A 148-amino-acid chain; its full sequence is 3-dehydroquinate dehydratase (148 aa).

The Proton acceptor role is filled by Tyr-26. Positions 77, 83, and 90 each coordinate substrate. His-103 (proton donor) is an active-site residue. Residues 104–105 (LS) and Arg-114 contribute to the substrate site.

It belongs to the type-II 3-dehydroquinase family. As to quaternary structure, homododecamer.

It carries out the reaction 3-dehydroquinate = 3-dehydroshikimate + H2O. It functions in the pathway metabolic intermediate biosynthesis; chorismate biosynthesis; chorismate from D-erythrose 4-phosphate and phosphoenolpyruvate: step 3/7. In terms of biological role, catalyzes a trans-dehydration via an enolate intermediate. The polypeptide is 3-dehydroquinate dehydratase (Chlorobaculum tepidum (strain ATCC 49652 / DSM 12025 / NBRC 103806 / TLS) (Chlorobium tepidum)).